A 467-amino-acid chain; its full sequence is Methylenetetrahydrofolate--tRNA-(uracil-5-)-methyltransferase TrmFO (467 aa).

FAD is bound at residue 11–16; the sequence is GAGLAG.

It belongs to the MnmG family. TrmFO subfamily. The cofactor is FAD.

Its subcellular location is the cytoplasm. The catalysed reaction is uridine(54) in tRNA + (6R)-5,10-methylene-5,6,7,8-tetrahydrofolate + NADH + H(+) = 5-methyluridine(54) in tRNA + (6S)-5,6,7,8-tetrahydrofolate + NAD(+). The enzyme catalyses uridine(54) in tRNA + (6R)-5,10-methylene-5,6,7,8-tetrahydrofolate + NADPH + H(+) = 5-methyluridine(54) in tRNA + (6S)-5,6,7,8-tetrahydrofolate + NADP(+). Its function is as follows. Catalyzes the folate-dependent formation of 5-methyl-uridine at position 54 (M-5-U54) in all tRNAs. The sequence is that of Methylenetetrahydrofolate--tRNA-(uracil-5-)-methyltransferase TrmFO from Prochlorococcus marinus (strain NATL2A).